The chain runs to 472 residues: 2-oxoglutarate carboxylase small subunit (472 aa).

The region spanning 1-445 is the Biotin carboxylation domain; the sequence is MFKKVLVANR…TTRYLEEHPH (445 aa). ATP is bound by residues Lys115 and Glu199. One can recognise an ATP-grasp domain in the interval 119–316; the sequence is KEVMKRAGVP…IVKWQIRIAA (198 aa). Residue Arg291 is part of the active site.

As to quaternary structure, heterohexadecamer of 8 large subunits and 8 small subunits. Mg(2+) is required as a cofactor. Requires Mn(2+) as cofactor. Co(2+) serves as cofactor.

The catalysed reaction is hydrogencarbonate + 2-oxoglutarate + ATP = (S)-oxalosuccinate + ADP + phosphate + H(+). This is 2-oxoglutarate carboxylase small subunit from Hydrogenobacter thermophilus (strain DSM 6534 / IAM 12695 / TK-6).